Reading from the N-terminus, the 37-residue chain is Large ribosomal subunit protein bL36 (37 aa).

It belongs to the bacterial ribosomal protein bL36 family.

This chain is Large ribosomal subunit protein bL36, found in Leptospira biflexa serovar Patoc (strain Patoc 1 / Ames).